Reading from the N-terminus, the 59-residue chain is Large ribosomal subunit protein uL30 (59 aa).

It belongs to the universal ribosomal protein uL30 family. Part of the 50S ribosomal subunit.

The protein is Large ribosomal subunit protein uL30 of Buchnera aphidicola subsp. Schizaphis graminum (strain Sg).